Reading from the N-terminus, the 60-residue chain is uncharacterized protein (60 aa).

A helical transmembrane segment spans residues 14-34 (MLFLGTIGLAVVVGGLMAYGY). The tract at residues 38–60 (GKTPSSGTSFHTASPSFSSRYRY) is disordered. Polar residues predominate over residues 40-60 (TPSSGTSFHTASPSFSSRYRY).

Its subcellular location is the host membrane. This is an uncharacterized protein from Dryophytes versicolor (chameleon treefrog).